We begin with the raw amino-acid sequence, 315 residues long: Ankyrin repeat domain-containing protein SOWAHD (315 aa).

Residues 1-39 form a disordered region; sequence MAQLGGAANRAPTASLAPTSQSLRCAPQPRPSRADTGSL. 3 ANK repeats span residues 112–141, 147–162, and 186–216; these read PREHAWILAAAEGRYEVLRELLEAEPELLL, TGYSVLHWLAKHGRHE, and GGLTPLHLAALQGHDMVIKVLVGALGADATR.

Belongs to the SOWAH family.

This chain is Ankyrin repeat domain-containing protein SOWAHD (SOWAHD), found in Homo sapiens (Human).